Consider the following 284-residue polypeptide: 2-dehydro-3-deoxyphosphooctonate aldolase (284 aa).

The protein belongs to the KdsA family.

It localises to the cytoplasm. It catalyses the reaction D-arabinose 5-phosphate + phosphoenolpyruvate + H2O = 3-deoxy-alpha-D-manno-2-octulosonate-8-phosphate + phosphate. The protein operates within carbohydrate biosynthesis; 3-deoxy-D-manno-octulosonate biosynthesis; 3-deoxy-D-manno-octulosonate from D-ribulose 5-phosphate: step 2/3. Its pathway is bacterial outer membrane biogenesis; lipopolysaccharide biosynthesis. The chain is 2-dehydro-3-deoxyphosphooctonate aldolase from Sodalis glossinidius (strain morsitans).